The sequence spans 361 residues: Terpene synthase 6 (361 aa).

The short motif at 81-86 (DDVLDA) is the DDxx(x)D/E motif element. Residues 223-231 (NDLVSYEKE) carry the NDxxSxxxD/E motif motif.

Belongs to the terpene synthase family.

It carries out the reaction (2E,6E)-farnesyl diphosphate = (2S,3R,6S,9S)-(-)-protoillud-7-ene + diphosphate. Its function is as follows. Terpene synthase that converts its substrate farnesyl diphosphate (FPP) into the sesquiterpene (2S,3R,6S,9S)-(-)-protoillud-7-ene. This chain is Terpene synthase 6, found in Dictyostelium discoideum (Social amoeba).